The chain runs to 173 residues: Ribosome maturation factor RimM (173 aa).

One can recognise a PRC barrel domain in the interval 95–169 (DPDEFYDHQL…VIEIDPPEGL (75 aa)).

It belongs to the RimM family. In terms of assembly, binds ribosomal protein uS19.

It localises to the cytoplasm. Functionally, an accessory protein needed during the final step in the assembly of 30S ribosomal subunit, possibly for assembly of the head region. Essential for efficient processing of 16S rRNA. May be needed both before and after RbfA during the maturation of 16S rRNA. It has affinity for free ribosomal 30S subunits but not for 70S ribosomes. This is Ribosome maturation factor RimM from Mycobacteroides abscessus (strain ATCC 19977 / DSM 44196 / CCUG 20993 / CIP 104536 / JCM 13569 / NCTC 13031 / TMC 1543 / L948) (Mycobacterium abscessus).